A 374-amino-acid polypeptide reads, in one-letter code: Phosphomevalonate kinase (374 aa).

It belongs to the GHMP kinase family. In terms of assembly, homodimer. It depends on Mg(2+) as a cofactor.

It catalyses the reaction (R)-5-phosphomevalonate + ATP = (R)-5-diphosphomevalonate + ADP. It functions in the pathway isoprenoid biosynthesis; isopentenyl diphosphate biosynthesis via mevalonate pathway; isopentenyl diphosphate from (R)-mevalonate: step 2/3. Functionally, catalyzes the phosphorylation of (R)-mevalonate 5-phosphate (MVAP) to (R)-mevalonate 5-diphosphate (MVAPP). Functions in the mevalonate (MVA) pathway leading to isopentenyl diphosphate (IPP), a key precursor for the biosynthesis of isoprenoid compounds. This chain is Phosphomevalonate kinase, found in Streptomyces sp. (strain CL190).